We begin with the raw amino-acid sequence, 104 residues long: Small ribosomal subunit protein bS16 (104 aa).

It belongs to the bacterial ribosomal protein bS16 family.

The sequence is that of Small ribosomal subunit protein bS16 from Gemmatimonas aurantiaca (strain DSM 14586 / JCM 11422 / NBRC 100505 / T-27).